The primary structure comprises 530 residues: Glutamate--tRNA ligase (530 aa).

A 'HIGH' region motif is present at residues 26 to 36 (PSPTGKAHIGT). The short motif at 267–271 (KLSKR) is the 'KMSKS' region element. Residue Lys-270 participates in ATP binding.

It belongs to the class-I aminoacyl-tRNA synthetase family. Glutamate--tRNA ligase type 1 subfamily. Monomer.

The protein localises to the cytoplasm. It catalyses the reaction tRNA(Glu) + L-glutamate + ATP = L-glutamyl-tRNA(Glu) + AMP + diphosphate. Catalyzes the attachment of glutamate to tRNA(Glu) in a two-step reaction: glutamate is first activated by ATP to form Glu-AMP and then transferred to the acceptor end of tRNA(Glu). This Gloeobacter violaceus (strain ATCC 29082 / PCC 7421) protein is Glutamate--tRNA ligase.